We begin with the raw amino-acid sequence, 357 residues long: Sorbitol dehydrogenase (357 aa).

An N-acetylalanine modification is found at A2. C45 provides a ligand contact to Zn(2+). Y51 serves as a coordination point for substrate. Zn(2+) contacts are provided by H70 and E71. E156 is a binding site for substrate. I184, D204, and R209 together coordinate NAD(+). S211 and S225 each carry phosphoserine. Residues 273-275 (VGL) and 297-299 (VFR) each bind NAD(+). R299 and Y300 together coordinate substrate.

This sequence belongs to the zinc-containing alcohol dehydrogenase family. Homotetramer. Zn(2+) serves as cofactor.

The protein resides in the mitochondrion membrane. Its subcellular location is the cell projection. It localises to the cilium. It is found in the flagellum. The enzyme catalyses xylitol + NAD(+) = D-xylulose + NADH + H(+). It catalyses the reaction L-iditol + NAD(+) = keto-L-sorbose + NADH + H(+). The catalysed reaction is keto-D-fructose + NADH + H(+) = D-sorbitol + NAD(+). Polyol dehydrogenase that catalyzes the reversible NAD(+)-dependent oxidation of various sugar alcohols. Is active with xylitol, L-iditol and D-sorbitol (D-glucitol) as substrates, leading to the C2-oxidized products D-xylulose, L-sorbose and D-fructose, respectively. Is a key enzyme in the polyol pathway that interconverts glucose and fructose via sorbitol, which constitutes an important alternate route for glucose metabolism. May play a role in sperm motility by using sorbitol as an alternative energy source for sperm motility. The polypeptide is Sorbitol dehydrogenase (SORD) (Macaca fascicularis (Crab-eating macaque)).